Consider the following 141-residue polypeptide: Phosphoribosyl-AMP cyclohydrolase (141 aa).

Asp-88 serves as a coordination point for Mg(2+). Cys-89 serves as a coordination point for Zn(2+). Positions 90 and 92 each coordinate Mg(2+). Residues Cys-109 and Cys-116 each contribute to the Zn(2+) site.

It belongs to the PRA-CH family. Homodimer. It depends on Mg(2+) as a cofactor. Requires Zn(2+) as cofactor.

It localises to the cytoplasm. It catalyses the reaction 1-(5-phospho-beta-D-ribosyl)-5'-AMP + H2O = 1-(5-phospho-beta-D-ribosyl)-5-[(5-phospho-beta-D-ribosylamino)methylideneamino]imidazole-4-carboxamide. Its pathway is amino-acid biosynthesis; L-histidine biosynthesis; L-histidine from 5-phospho-alpha-D-ribose 1-diphosphate: step 3/9. Catalyzes the hydrolysis of the adenine ring of phosphoribosyl-AMP. The protein is Phosphoribosyl-AMP cyclohydrolase of Paracidovorax citrulli (strain AAC00-1) (Acidovorax citrulli).